The following is a 193-amino-acid chain: Acyl carrier protein phosphodiesterase (193 aa).

It belongs to the AcpH family.

The catalysed reaction is holo-[ACP] + H2O = apo-[ACP] + (R)-4'-phosphopantetheine + H(+). Converts holo-ACP to apo-ACP by hydrolytic cleavage of the phosphopantetheine prosthetic group from ACP. In Escherichia coli O157:H7, this protein is Acyl carrier protein phosphodiesterase.